Reading from the N-terminus, the 330-residue chain is Anthranilate phosphoribosyltransferase (330 aa).

5-phospho-alpha-D-ribose 1-diphosphate contacts are provided by residues Gly79, 82 to 83 (GD), Thr87, 89 to 92 (NIST), 107 to 115 (KHGNYGVSS), and Ser119. Gly79 is an anthranilate binding site. Ser91 contributes to the Mg(2+) binding site. Residue Asn110 coordinates anthranilate. An anthranilate-binding site is contributed by Arg165. Mg(2+)-binding residues include Asp223 and Glu224.

The protein belongs to the anthranilate phosphoribosyltransferase family. As to quaternary structure, homodimer. It depends on Mg(2+) as a cofactor.

The catalysed reaction is N-(5-phospho-beta-D-ribosyl)anthranilate + diphosphate = 5-phospho-alpha-D-ribose 1-diphosphate + anthranilate. It functions in the pathway amino-acid biosynthesis; L-tryptophan biosynthesis; L-tryptophan from chorismate: step 2/5. Its function is as follows. Catalyzes the transfer of the phosphoribosyl group of 5-phosphorylribose-1-pyrophosphate (PRPP) to anthranilate to yield N-(5'-phosphoribosyl)-anthranilate (PRA). The chain is Anthranilate phosphoribosyltransferase from Flavobacterium johnsoniae (strain ATCC 17061 / DSM 2064 / JCM 8514 / BCRC 14874 / CCUG 350202 / NBRC 14942 / NCIMB 11054 / UW101) (Cytophaga johnsonae).